The sequence spans 263 residues: MRITQDVFQKMRDDGEKIAIVTCYDASFAALLERAGVDILLVGDSLGNVIQGEETTLPVTLDDMIYHTLCVKRGASTAFIMTDMPFGTSQVSPEETFRNAAELMAAGANMVKIEGGSVMAETVEFLTQRGIPVCAHIGLTPQSVNQLGGYKVQGKTDYEAEQLLEDAVALEQAGAGMLLMEVVPAALAAQVTRTLSIPTIGIGAGKDCSAQVLVLYDMLGIYSGKKARFMKNFLTGAGSIEEAVQNYTRAVKTGEFPGPEHTF.

Mg(2+)-binding residues include Asp44 and Asp83. Residues 44–45 (DS), Asp83, and Lys112 contribute to the 3-methyl-2-oxobutanoate site. Glu114 lines the Mg(2+) pocket. Glu181 (proton acceptor) is an active-site residue.

It belongs to the PanB family. In terms of assembly, homodecamer; pentamer of dimers. It depends on Mg(2+) as a cofactor.

The protein localises to the cytoplasm. The enzyme catalyses 3-methyl-2-oxobutanoate + (6R)-5,10-methylene-5,6,7,8-tetrahydrofolate + H2O = 2-dehydropantoate + (6S)-5,6,7,8-tetrahydrofolate. It participates in cofactor biosynthesis; (R)-pantothenate biosynthesis; (R)-pantoate from 3-methyl-2-oxobutanoate: step 1/2. Functionally, catalyzes the reversible reaction in which hydroxymethyl group from 5,10-methylenetetrahydrofolate is transferred onto alpha-ketoisovalerate to form ketopantoate. The protein is 3-methyl-2-oxobutanoate hydroxymethyltransferase of Nitrosospira multiformis (strain ATCC 25196 / NCIMB 11849 / C 71).